The chain runs to 410 residues: Argininosuccinate synthase (410 aa).

10 to 18 (AYSGGLDTS) contacts ATP. The L-citrulline site is built by tyrosine 88 and serine 93. Glycine 118 lines the ATP pocket. L-aspartate-binding residues include threonine 120, asparagine 124, and aspartate 125. Asparagine 124 is an L-citrulline binding site. L-citrulline contacts are provided by arginine 128, serine 177, serine 186, glutamate 262, and tyrosine 274.

It belongs to the argininosuccinate synthase family. Type 1 subfamily. As to quaternary structure, homotetramer.

It is found in the cytoplasm. The catalysed reaction is L-citrulline + L-aspartate + ATP = 2-(N(omega)-L-arginino)succinate + AMP + diphosphate + H(+). The protein operates within amino-acid biosynthesis; L-arginine biosynthesis; L-arginine from L-ornithine and carbamoyl phosphate: step 2/3. The chain is Argininosuccinate synthase from Thermoanaerobacter pseudethanolicus (strain ATCC 33223 / 39E) (Clostridium thermohydrosulfuricum).